Consider the following 266-residue polypeptide: Signal peptidase I (266 aa).

Over 1-20 (MQTDNTKSNTNKTAKQEWGS) the chain is Cytoplasmic. A helical membrane pass occupies residues 21 to 41 (FAFVICIALLIRILIMEPFNV). Topologically, residues 42 to 266 (PTGSMKATIL…IFRNLYNTDA (225 aa)) are extracellular. Catalysis depends on residues Ser-45 and Lys-108.

The protein belongs to the peptidase S26 family.

The protein localises to the cell membrane. The enzyme catalyses Cleavage of hydrophobic, N-terminal signal or leader sequences from secreted and periplasmic proteins.. This chain is Signal peptidase I (lepB), found in Rickettsia conorii (strain ATCC VR-613 / Malish 7).